Reading from the N-terminus, the 92-residue chain is uncharacterized protein (92 aa).

This is an uncharacterized protein from Escherichia coli O157:H7.